Consider the following 493-residue polypeptide: MSFKDLRSFIDHLEANGELKRISYPVDPHLEMTEIADRVLRAKGPALLFENPKDHHMPVLVNLFGTPKRVAMALGKDDPLALREVGELLAFLKEPEPPRGFKDAIAKIPMFKQALNMPPKTVRNPPCQQVIKTGDEVDLTQLPIQHCWPGDVAPLVTWGLTITKGPRKSRQNLGIYRQQLLGKNKLIMRWLSHRGGALDFADFKQQFPGERYPVVVALGADPVTILGAVTPVPDSMSEYAFAGLLRGERTEVCKALSCDLEVPATSEIILEGYIDPEELAEEGPYGDHTGYYNETDKFPVFTVTHITHRKDAIYHSTYTGRPPDEPAMLGVALNEVFVPILRKQYPEIVDFYLPPEGCSYRMAVISIRKQYPGHAKRVMMGAWSFLRQFMYTKFIVIVDEDVNCRDWQDVIWAITTRMDPKRDTVMIENTPIDYLDFASPVAGLGSKMGLDATNKWEGETNREWGTPIVMDPKVKQKIDSIWDELGIDDSPTL.

Asn-172 is a Mn(2+) binding site. Residues 175–177 (IYR), 189–191 (RWL), and 194–195 (RG) contribute to the prenylated FMN site. Glu-238 provides a ligand contact to Mn(2+). Asp-287 serves as the catalytic Proton donor.

It belongs to the UbiD family. As to quaternary structure, homohexamer. The cofactor is prenylated FMN. Mn(2+) is required as a cofactor.

The protein resides in the cell membrane. It catalyses the reaction a 4-hydroxy-3-(all-trans-polyprenyl)benzoate + H(+) = a 2-(all-trans-polyprenyl)phenol + CO2. The protein operates within cofactor biosynthesis; ubiquinone biosynthesis. Its function is as follows. Catalyzes the decarboxylation of 3-octaprenyl-4-hydroxy benzoate to 2-octaprenylphenol, an intermediate step in ubiquinone biosynthesis. The sequence is that of 3-octaprenyl-4-hydroxybenzoate carboxy-lyase from Shewanella baltica (strain OS195).